Here is a 678-residue protein sequence, read N- to C-terminus: ABC transporter G family member 13 (678 aa).

Residues 10-254 (VAWEDLTVVI…FGEAGFPCPS (245 aa)) form the ABC transporter domain. An ATP-binding site is contributed by 48 to 55 (GPSGSGKS). The ABC transmembrane type-2 domain maps to 355-567 (KQLRILTQRS…ALQGAYKNEM (213 aa)). The next 6 helical transmembrane spans lie at 374-394 (YYWM…SIFF), 409-429 (CGGF…QSFI), 446-466 (VAVY…LMCL), 490-510 (LDLI…ASVV), 513-533 (FLMG…SAGF), and 602-622 (LDLA…FAIL). Ser658 is subject to Phosphoserine.

Belongs to the ABC transporter superfamily. ABCG family. Eye pigment precursor importer (TC 3.A.1.204) subfamily.

Its subcellular location is the membrane. In Arabidopsis thaliana (Mouse-ear cress), this protein is ABC transporter G family member 13 (ABCG13).